Consider the following 299-residue polypeptide: Taste receptor type 2 member 16 (299 aa).

The Extracellular segment spans residues 1 to 5 (MVPTQ). A helical membrane pass occupies residues 6–26 (VTIFSIIMYVLESLVIIVQSC). The Cytoplasmic portion of the chain corresponds to 27–44 (TTVAVLFREWMHFQRLSP). The helical transmembrane segment at 45-65 (VEIILISLGISHFCLQWTSML) threads the bilayer. At 66 to 82 (YNFGTYSRPVLLFWKVS) the chain is on the extracellular side. The chain crosses the membrane as a helical span at residues 83–103 (VVWEFMNVLTFWLTSLLAVLY). The Cytoplasmic portion of the chain corresponds to 104–125 (CVKVSSFSHPVFLWLRLKILKL). The chain crosses the membrane as a helical span at residues 126–146 (VLWLLLGALIASCLSIIPSVV). Over 147-183 (KYHIQMELLTLDHLPKNSSLILRLQMFEWYFSNPFKM) the chain is Extracellular. N-linked (GlcNAc...) asparagine glycosylation is present at asparagine 163. The helical transmembrane segment at 184–204 (IGFGVPFLVFLISIILLTVSL) threads the bilayer. Topologically, residues 205 to 233 (VQHWGQMKHYSSSSSSLRAQCTVLKSLAT) are cytoplasmic. Residues 234–254 (FFIFFTSYFLTIVVSFIGTVF) traverse the membrane as a helical segment. The Extracellular segment spans residues 255 to 258 (DKKS). The chain crosses the membrane as a helical span at residues 259-279 (WFWVCEAVIYGLVCIHFTSLM). At 280–299 (MSNPTLKKALRLQFWSPESS) the chain is on the cytoplasmic side.

This sequence belongs to the G-protein coupled receptor T2R family. As to quaternary structure, interacts with RTP3 and RTP4. As to expression, expressed in subsets of taste receptor cells of the tongue and palate epithelium and exclusively in gustducin-positive cells. Expressed in the antrum and fundus (part of the stomach), duodenum and in gastric endocrine cells.

It localises to the cell membrane. Gustducin-coupled receptor implicated in the perception of bitter compounds in the oral cavity and the gastrointestinal tract. Signals through PLCB2 and the calcium-regulated cation channel TRPM5. This chain is Taste receptor type 2 member 16 (Tas2r16), found in Rattus norvegicus (Rat).